We begin with the raw amino-acid sequence, 556 residues long: Solute carrier family 22 member 1 (556 aa).

At 1–21 the chain is on the cytoplasmic side; sequence MPTVDDVLEQVGEFGWFQKQA. A helical membrane pass occupies residues 22–42; it reads FLLLCLISASLAPIYVGIVFL. The Extracellular segment spans residues 43 to 150; sequence GFTPGHYCQN…LVCGDAWKVD (108 aa). N-linked (GlcNAc...) asparagine glycosylation is present at Asn-71. Residues 151-171 traverse the membrane as a helical segment; the sequence is LFQSCVNLGFFLGSLVVGYIA. Residues 172–177 are Cytoplasmic-facing; sequence DRFGRK. A helical transmembrane segment spans residues 178-198; it reads LCLLVTTLVTSVSGVLTAVAP. Over 199-211 the chain is Extracellular; the sequence is DYTSMLLFRLLQG. The helical transmembrane segment at 212-231 threads the bilayer; sequence MVSKGSWVSGYTLITEFVGS. Over 232–238 the chain is Cytoplasmic; the sequence is GYRRTTA. The helical transmembrane segment at 239-259 threads the bilayer; the sequence is ILYQMAFTVGLVGLAGVAYAI. Topologically, residues 260–263 are extracellular; it reads PDWR. A helical membrane pass occupies residues 264–284; sequence WLQLAVSLPTFLFLLYYWFVP. The Proline-rich sequence motif lies at 284-288; the sequence is PESPR. Over 285 to 348 the chain is Cytoplasmic; the sequence is ESPRWLLSQK…FRTPNLRKHT (64 aa). Ser-334 is subject to Phosphoserine. A helical membrane pass occupies residues 349–369; the sequence is VILMYLWFSCAVLYQGLIMHV. Residues 370–377 are Extracellular-facing; that stretch reads GATGANLY. Residues 378 to 398 form a helical membrane-spanning segment; that stretch reads LDFFYSSLVEFPAAFIILVTI. The Cytoplasmic segment spans residues 399-403; sequence DRIGR. The chain crosses the membrane as a helical span at residues 404 to 424; sequence IYPIAASNLVTGAACLLMIFI. The Extracellular portion of the chain corresponds to 425–429; it reads PHELH. A helical transmembrane segment spans residues 430 to 452; sequence WLNVTLACLGRMGATIVLQMVCL. Topologically, residues 453 to 465 are cytoplasmic; the sequence is VNAELYPTFIRNL. A helical transmembrane segment spans residues 466-486; the sequence is GMMVCSALCDLGGIFTPFMVF. Over 487–493 the chain is Extracellular; sequence RLMEVWQ. A helical membrane pass occupies residues 494-514; that stretch reads ALPLILFGVLGLTAGAMTLLL. The Cytoplasmic segment spans residues 515 to 556; it reads PETKGVALPETIEEAENLGRRKSKAKENTIYLQVQTGKSSST. Thr-543 bears the Phosphothreonine mark.

Belongs to the major facilitator (TC 2.A.1) superfamily. Organic cation transporter (TC 2.A.1.19) family. In terms of processing, phosphorylated. Expressed in kidney cortex in S1, S2 segments of renal proximal tubules as well as in kidney medulla. Expressed throughout the liver lobuli, in hepatocytes surrounding the central veins. Expressed in enterocytes of villi and crypts in small intestine. Expressed in brain, in some white matter regions like the corpus callosum and in the granular layer of the cerebellum. Expressed in Sertoli cells in testis. Expressed in colon. Expressed in tracheal and bronchial ciliated epithelium in the respiratory tract. Expressed in spleen, moderately in skin, and weakly in the gastrointestinal tract, lung, thymus, muscle, and prostate. As to expression, expressed in kidney cortex and medulla. Expressed in intestine, liver and colon.

The protein resides in the basolateral cell membrane. Its subcellular location is the apical cell membrane. The protein localises to the lateral cell membrane. It localises to the basal cell membrane. It is found in the cell membrane. It catalyses the reaction 1-methylnicotinamide(out) = 1-methylnicotinamide(in). It carries out the reaction dopamine(out) = dopamine(in). The catalysed reaction is serotonin(out) = serotonin(in). The enzyme catalyses (R)-adrenaline(out) = (R)-adrenaline(in). It catalyses the reaction (R)-noradrenaline(out) = (R)-noradrenaline(in). It carries out the reaction histamine(out) = histamine(in). The catalysed reaction is guanidine(out) = guanidine(in). The enzyme catalyses choline(out) = choline(in). It catalyses the reaction acetylcholine(in) = acetylcholine(out). It carries out the reaction thiamine(in) = thiamine(out). The catalysed reaction is agmatine(out) = agmatine(in). The enzyme catalyses putrescine(out) = putrescine(in). It catalyses the reaction spermidine(in) = spermidine(out). It carries out the reaction (R)-carnitine(in) = (R)-carnitine(out). The catalysed reaction is O-isobutanoyl-(R)-carnitine(in) = O-isobutanoyl-(R)-carnitine(out). The enzyme catalyses O-acetyl-(R)-carnitine(in) = O-acetyl-(R)-carnitine(out). It catalyses the reaction O-3-hydroxybutanoyl-(R)-carnitine(in) = O-3-hydroxybutanoyl-(R)-carnitine(out). It carries out the reaction O-propanoyl-(R)-carnitine(in) = O-propanoyl-(R)-carnitine(out). The catalysed reaction is O-butanoyl-(R)-carnitine(in) = O-butanoyl-(R)-carnitine(out). The enzyme catalyses O-2-methylbutanoyl-(R)-carnitine(in) = O-2-methylbutanoyl-(R)-carnitine(out). It catalyses the reaction O-3-methylbutanoyl-(R)-carnitine(in) = O-3-methylbutanoyl-(R)-carnitine(out). It carries out the reaction O-hexanoyl-(R)-carnitine(in) = O-hexanoyl-(R)-carnitine(out). The catalysed reaction is L-histidyl-L-proline diketopiperazine(in) = L-histidyl-L-proline diketopiperazine(out). The enzyme catalyses (R)-salsolinol(in) = (R)-salsolinol(out). It catalyses the reaction prostaglandin F2alpha(out) = prostaglandin F2alpha(in). It carries out the reaction prostaglandin E2(out) = prostaglandin E2(in). Its activity is regulated as follows. Phosphorylation of the transporter leads to changes in its substrate affinity, resulting in a regulation of the transport activity. In contrast with human ortholog, ASP uptake is stimulated by protein kinase A (PKA) and C (PKC) and endogenous tyrosine kinase activation. ASP affinity is induced by PKC-dependent phosphorylation. Inhibited by cGMP, most likely through a cGMP-binding protein that interacts with OCT1. Functionally, electrogenic voltage-dependent transporter that mediates the transport of a variety of organic cations such as endogenous bioactive amines, cationic drugs and xenobiotics. Functions as a pH- and Na(+)-independent, bidirectional transporter. Cation cellular uptake or release is driven by the electrochemical potential (i.e. membrane potential and concentration gradient) and substrate selectivity. Hydrophobicity is a major requirement for recognition in polyvalent substrates and inhibitors. Primarily expressed in the basolateral membrane of hepatocytes and proximal tubules and involved in the uptake and disposition of cationic compounds from the blood by hepatic and renal clearance. Most likely functions as an uptake carrier in enterocytes contributing to the intestinal excretion and elimination of organic cations from the systemic circulation. Transports endogenous monoamines such as N-1-methylnicotinamide (NMN), guanidine, neurotransmitters dopamine, serotonin, noradrenaline, adrenaline and histamine, and quaternary ammonium compound such as choline. Also transports natural polyamines such as spermidine, agmatine and putrescine at low affinity, but relatively high turnover. Involved in the hepatic uptake of vitamin B1/thiamine, hence regulating hepatic lipid and energy metabolism. Contributes to the influx and efflux of fatty acid carriers carnitines and acylcarnitines across the basolateral membrane of hepatocytes, from the liver to the systemic circulation and inversely and may be involved in regulating the systemic availability of hepatic acylcarnitines. Mediates the bidirectional transport of acetylcholine (ACh) at the apical membrane of ciliated cell in airway epithelium, thereby playing a role in luminal release of ACh from bronchial epithelium. Transports dopaminergic neuromodulators cyclo(his-pro) and salsolinol with lower efficency. Also capable of transporting non-amine endogenous compounds such as prostaglandin E2 (PGE2) and prostaglandin F2-alpha (PGF2-alpha). May contribute to the transport of cationic compounds in testis across the blood-testis-barrier. Also mediates the uptake of xenobiotics tributylmethylammonium (TBuMA), quinidine, N-methyl-quinine (NMQ), N-methyl-quinidine (NMQD) N-(4,4-azo-n-pentyl)-quinuclidine (APQ), azidoprocainamide methoiodide (AMP), N-(4,4-azo-n-pentyl)-21-deoxyajmalinium (APDA) and 4-(4-(dimethylamino)styryl)-N-methylpyridinium (ASP). Functional isoform capable of transporting TEA. The chain is Solute carrier family 22 member 1 from Rattus norvegicus (Rat).